The sequence spans 228 residues: ATP-dependent dethiobiotin synthetase BioD (228 aa).

Residue D13–V18 participates in ATP binding. T17 contacts Mg(2+). K38 is a catalytic residue. ATP-binding positions include D55, E116–G119, N176–R177, and P205–I207. Residues D55 and E116 each coordinate Mg(2+).

The protein belongs to the dethiobiotin synthetase family. In terms of assembly, homodimer. Requires Mg(2+) as cofactor.

The protein resides in the cytoplasm. The enzyme catalyses (7R,8S)-7,8-diammoniononanoate + CO2 + ATP = (4R,5S)-dethiobiotin + ADP + phosphate + 3 H(+). Its pathway is cofactor biosynthesis; biotin biosynthesis; biotin from 7,8-diaminononanoate: step 1/2. Functionally, catalyzes a mechanistically unusual reaction, the ATP-dependent insertion of CO2 between the N7 and N8 nitrogen atoms of 7,8-diaminopelargonic acid (DAPA, also called 7,8-diammoniononanoate) to form a ureido ring. In Vibrio parahaemolyticus serotype O3:K6 (strain RIMD 2210633), this protein is ATP-dependent dethiobiotin synthetase BioD.